A 234-amino-acid polypeptide reads, in one-letter code: Ubiquitin thioesterase OTUB2 (234 aa).

The OTU domain maps to 40–231 (TSIRKTKGDG…TSHYNILYAA (192 aa)). The active site involves Asp48. The active-site Nucleophile is Cys51. Active-site residues include His205 and His224.

Belongs to the peptidase C65 family.

The enzyme catalyses Thiol-dependent hydrolysis of ester, thioester, amide, peptide and isopeptide bonds formed by the C-terminal Gly of ubiquitin (a 76-residue protein attached to proteins as an intracellular targeting signal).. Its function is as follows. Hydrolase that can remove conjugated ubiquitin from proteins in vitro and may therefore play an important regulatory role at the level of protein turnover by preventing degradation. Mediates deubiquitination of 'Lys-11'-,'Lys-48'- and 'Lys-63'-linked polyubiquitin chains, with a preference for 'Lys-63'-linked polyubiquitin chains. The chain is Ubiquitin thioesterase OTUB2 (Otub2) from Mus musculus (Mouse).